A 245-amino-acid polypeptide reads, in one-letter code: Ribonuclease 3 (245 aa).

Residues 24–146 enclose the RNase III domain; it reads YTVFSQKLGY…IIGAIYLESG (123 aa). E59 contributes to the Mg(2+) binding site. The active site involves D63. Positions 132 and 135 each coordinate Mg(2+). E135 is an active-site residue. In terms of domain architecture, DRBM spans 173–243; the sequence is DPKTLLQEYL…ARRAYKLAVV (71 aa).

The protein belongs to the ribonuclease III family. As to quaternary structure, homodimer. Mg(2+) is required as a cofactor.

Its subcellular location is the cytoplasm. It catalyses the reaction Endonucleolytic cleavage to 5'-phosphomonoester.. In terms of biological role, digests double-stranded RNA. Involved in the processing of primary rRNA transcript to yield the immediate precursors to the large and small rRNAs (23S and 16S). Processes some mRNAs, and tRNAs when they are encoded in the rRNA operon. Processes pre-crRNA and tracrRNA of type II CRISPR loci if present in the organism. This is Ribonuclease 3 from Nitrosomonas eutropha (strain DSM 101675 / C91 / Nm57).